The primary structure comprises 340 residues: Heat-inducible transcription repressor HrcA (340 aa).

It belongs to the HrcA family.

In terms of biological role, negative regulator of class I heat shock genes (grpE-dnaK-dnaJ and groELS operons). Prevents heat-shock induction of these operons. The protein is Heat-inducible transcription repressor HrcA of Mycoplasmopsis synoviae (strain 53) (Mycoplasma synoviae).